A 101-amino-acid chain; its full sequence is NAD(P)H-quinone oxidoreductase subunit 4L, chloroplastic (101 aa).

Transmembrane regions (helical) follow at residues 2–22, 32–52, and 61–81; these read MLEH…YGLI, MCLE…SDFF, and IFSI…PAIV.

Belongs to the complex I subunit 4L family. In terms of assembly, NDH is composed of at least 16 different subunits, 5 of which are encoded in the nucleus.

The protein resides in the plastid. It localises to the chloroplast thylakoid membrane. It catalyses the reaction a plastoquinone + NADH + (n+1) H(+)(in) = a plastoquinol + NAD(+) + n H(+)(out). The enzyme catalyses a plastoquinone + NADPH + (n+1) H(+)(in) = a plastoquinol + NADP(+) + n H(+)(out). Functionally, NDH shuttles electrons from NAD(P)H:plastoquinone, via FMN and iron-sulfur (Fe-S) centers, to quinones in the photosynthetic chain and possibly in a chloroplast respiratory chain. The immediate electron acceptor for the enzyme in this species is believed to be plastoquinone. Couples the redox reaction to proton translocation, and thus conserves the redox energy in a proton gradient. In Fagopyrum esculentum subsp. ancestrale (Wild buckwheat), this protein is NAD(P)H-quinone oxidoreductase subunit 4L, chloroplastic.